Reading from the N-terminus, the 403-residue chain is Homoserine O-succinyltransferase (403 aa).

The AB hydrolase-1 domain occupies 58–366 (NAVLICHALS…ESNHGHDAFL (309 aa)). The active-site Nucleophile is serine 164. Arginine 234 contributes to the substrate binding site. Catalysis depends on residues aspartate 329 and histidine 362. Aspartate 363 contacts substrate.

Belongs to the AB hydrolase superfamily. MetX family. Homodimer.

Its subcellular location is the cytoplasm. The catalysed reaction is L-homoserine + succinyl-CoA = O-succinyl-L-homoserine + CoA. The protein operates within amino-acid biosynthesis; L-methionine biosynthesis via de novo pathway; O-succinyl-L-homoserine from L-homoserine: step 1/1. Its function is as follows. Transfers a succinyl group from succinyl-CoA to L-homoserine, forming succinyl-L-homoserine. The protein is Homoserine O-succinyltransferase of Halothiobacillus neapolitanus (strain ATCC 23641 / c2) (Thiobacillus neapolitanus).